Reading from the N-terminus, the 96-residue chain is MRPYEIMVILDPTLDECTVGPSLETFLNVVRKDGGAIDKVDIWGRRRLAYEISKHAEGIYVVIDLKAAPATVSELDRQLSLNESVLRTKVMRTDKH.

It belongs to the bacterial ribosomal protein bS6 family.

Its function is as follows. Binds together with bS18 to 16S ribosomal RNA. In Mycobacterium leprae (strain TN), this protein is Small ribosomal subunit protein bS6 (rpsF).